A 178-amino-acid polypeptide reads, in one-letter code: Photosystem II extrinsic protein V (178 aa).

Positions 1–38 are cleaved as a signal peptide; that stretch reads MFSKFFSLQKAFAAARRRLLILILVLGMAGYAWGPALA. Residues Cys71, Cys74, His75, and His126 each contribute to the heme c site.

The protein belongs to the cytochrome c family. PsbV subfamily. In terms of assembly, PSII is composed of 1 copy each of membrane proteins PsbA, PsbB, PsbC, PsbD, PsbE, PsbF, PsbH, PsbI, PsbJ, PsbK, PsbL, PsbM, PsbT, PsbX, PsbY, PsbZ, Psb30/Ycf12, peripheral proteins PsbO, CyanoQ (PsbQ), PsbU, PsbV and a large number of cofactors. It forms dimeric complexes. The cofactor is heme c.

It localises to the cellular thylakoid membrane. One of the extrinsic, lumenal subunits of photosystem II (PSII). PSII is a light-driven water plastoquinone oxidoreductase, using light energy to abstract electrons from H(2)O, generating a proton gradient subsequently used for ATP formation. The extrinsic proteins stabilize the structure of photosystem II oxygen-evolving complex (OEC), the ion environment of oxygen evolution and protect the OEC against heat-induced inactivation. Low-potential cytochrome c that plays a role in the OEC of PSII. The polypeptide is Photosystem II extrinsic protein V (Synechococcus sp. (strain JA-3-3Ab) (Cyanobacteria bacterium Yellowstone A-Prime)).